The following is a 60-amino-acid chain: MAVQQNRKTRSKRGMRRSHDALTSSTLSTDPTTGEKHRRHHVTADGFYRGRKVVEVGDDE.

The disordered stretch occupies residues 1-47 (MAVQQNRKTRSKRGMRRSHDALTSSTLSTDPTTGEKHRRHHVTADGF). Over residues 7 to 16 (RKTRSKRGMR) the composition is skewed to basic residues.

Belongs to the bacterial ribosomal protein bL32 family.

The protein is Large ribosomal subunit protein bL32 of Teredinibacter turnerae (strain ATCC 39867 / T7901).